The chain runs to 256 residues: Hydroxyacylglutathione hydrolase (256 aa).

Residues H54, H56, D58, H59, H113, D136, and H174 each contribute to the Zn(2+) site.

It belongs to the metallo-beta-lactamase superfamily. Glyoxalase II family. As to quaternary structure, monomer. Zn(2+) is required as a cofactor.

It catalyses the reaction an S-(2-hydroxyacyl)glutathione + H2O = a 2-hydroxy carboxylate + glutathione + H(+). The protein operates within secondary metabolite metabolism; methylglyoxal degradation; (R)-lactate from methylglyoxal: step 2/2. In terms of biological role, thiolesterase that catalyzes the hydrolysis of S-D-lactoyl-glutathione to form glutathione and D-lactic acid. The sequence is that of Hydroxyacylglutathione hydrolase from Cyanothece sp. (strain PCC 7425 / ATCC 29141).